The sequence spans 340 residues: DNA-directed RNA polymerase subunit alpha (340 aa).

Residues Met-1–Glu-233 form an alpha N-terminal domain (alpha-NTD) region. The interval Lys-266–Phe-340 is alpha C-terminal domain (alpha-CTD).

This sequence belongs to the RNA polymerase alpha chain family. In terms of assembly, in plastids the minimal PEP RNA polymerase catalytic core is composed of four subunits: alpha, beta, beta', and beta''. When a (nuclear-encoded) sigma factor is associated with the core the holoenzyme is formed, which can initiate transcription.

The protein resides in the plastid. It is found in the chloroplast. It catalyses the reaction RNA(n) + a ribonucleoside 5'-triphosphate = RNA(n+1) + diphosphate. DNA-dependent RNA polymerase catalyzes the transcription of DNA into RNA using the four ribonucleoside triphosphates as substrates. The chain is DNA-directed RNA polymerase subunit alpha from Calycanthus floridus var. glaucus (Eastern sweetshrub).